Consider the following 375-residue polypeptide: Deoxyribonuclease-2 (375 aa).

An N-terminal signal peptide occupies residues 1-21 (MGLSPAAVLIFLLLGVSQTYA). N-linked (GlcNAc...) asparagine glycosylation occurs at Asn-131.

The protein belongs to the DNase II family.

It catalyses the reaction Endonucleolytic cleavage to nucleoside 3'-phosphates and 3'-phosphooligonucleotide end-products.. Hydrolyzes DNA under acidic conditions with a preference for double-stranded DNA. Implicated in apoptosis. The polypeptide is Deoxyribonuclease-2 (nuc-1) (Caenorhabditis elegans).